Reading from the N-terminus, the 518-residue chain is Stage V sporulation protein B (518 aa).

14 consecutive transmembrane segments (helical) span residues 6-26 (FLKG…LGFV), 45-65 (MAAP…PVAI), 91-111 (ITGV…PVMA), 120-140 (TLYP…SSVL), 165-185 (ISLV…YAAA), 186-206 (GAML…FVCF), 250-270 (WFFE…ATVA), 281-301 (FAMT…TALV), 326-346 (LCLL…DELM), 348-368 (VMYG…FFLL), 387-407 (AAMM…FVLA), 411-431 (SLGI…VTLL), 446-466 (IKEY…SSAI), and 478-498 (VNLA…LLVF).

Belongs to the polysaccharide synthase family.

The protein localises to the cell membrane. Its function is as follows. Involved, directly or indirectly, in spore cortex biosynthesis. Affects only indirectly the expression of late sporulation genes. The sequence is that of Stage V sporulation protein B (spoVB) from Bacillus subtilis (strain 168).